A 467-amino-acid chain; its full sequence is Cytochrome c-552 (467 aa).

Residues 1–27 (MVKKLTGKSFALSALVAASFVAAGAMA) form the signal peptide. Residue H87 coordinates heme c. Residues C115, C118, and K119 each coordinate heme. Heme c-binding residues include C153, C156, H157, C195, C198, and H199. Positions 201, 202, 250, and 252 each coordinate Ca(2+). A substrate-binding site is contributed by Y202. H253 provides a ligand contact to substrate. Residues H264, C271, C274, H275, H290, C303, C306, H307, and H382 each contribute to the heme c site.

This sequence belongs to the cytochrome c-552 family. The cofactor is Ca(2+). Heme c is required as a cofactor.

The protein resides in the periplasm. It carries out the reaction 6 Fe(III)-[cytochrome c] + NH4(+) + 2 H2O = 6 Fe(II)-[cytochrome c] + nitrite + 8 H(+). The protein operates within nitrogen metabolism; nitrate reduction (assimilation). In terms of biological role, catalyzes the reduction of nitrite to ammonia, consuming six electrons in the process. The polypeptide is Cytochrome c-552 (Shewanella amazonensis (strain ATCC BAA-1098 / SB2B)).